The sequence spans 427 residues: Glutamate-1-semialdehyde 2,1-aminomutase (427 aa).

Lys265 is subject to N6-(pyridoxal phosphate)lysine.

It belongs to the class-III pyridoxal-phosphate-dependent aminotransferase family. HemL subfamily. As to quaternary structure, homodimer. Pyridoxal 5'-phosphate serves as cofactor.

It localises to the cytoplasm. The enzyme catalyses (S)-4-amino-5-oxopentanoate = 5-aminolevulinate. The protein operates within porphyrin-containing compound metabolism; protoporphyrin-IX biosynthesis; 5-aminolevulinate from L-glutamyl-tRNA(Glu): step 2/2. The polypeptide is Glutamate-1-semialdehyde 2,1-aminomutase (Nitratiruptor sp. (strain SB155-2)).